We begin with the raw amino-acid sequence, 38 residues long: Allatostatin-C (38 aa).

The propeptide occupies 1-19 (MRRALDGPGSSSLDTRQAD). At Gln22 the chain carries Pyrrolidone carboxylic acid; partial.

The protein belongs to the allatostatin family. In its non-pyroglutamate form, expressed in antennal lobe (AL), corpora cardiaca (CC), corpora allata (CA) and gnathal ganglion (GNG) with expression in AL detected in most animals and expression in CC, CA and GNG detected in few animals (at protein level). In its pyroglutamate form, expressed in antennal lobe (AL), corpora cardiaca (CC) and corpora allata (CA) with expression detected in few animals (at protein level). Not expressed in GNG (protein level).

The protein resides in the secreted. Functionally, strongly inhibits juvenile hormone biosynthesis. The protein is Allatostatin-C of Agrotis ipsilon (Black cutworm moth).